The chain runs to 333 residues: Uroporphyrinogen decarboxylase (333 aa).

Substrate-binding positions include 22–26, aspartate 71, tyrosine 145, serine 200, and histidine 310; that span reads RQAGR.

This sequence belongs to the uroporphyrinogen decarboxylase family. Homodimer.

It is found in the cytoplasm. The enzyme catalyses uroporphyrinogen III + 4 H(+) = coproporphyrinogen III + 4 CO2. It functions in the pathway porphyrin-containing compound metabolism; protoporphyrin-IX biosynthesis; coproporphyrinogen-III from 5-aminolevulinate: step 4/4. Functionally, catalyzes the decarboxylation of four acetate groups of uroporphyrinogen-III to yield coproporphyrinogen-III. In Thermoplasma acidophilum (strain ATCC 25905 / DSM 1728 / JCM 9062 / NBRC 15155 / AMRC-C165), this protein is Uroporphyrinogen decarboxylase.